The following is a 411-amino-acid chain: Serine hydroxymethyltransferase (411 aa).

(6S)-5,6,7,8-tetrahydrofolate-binding positions include leucine 117 and 121–123 (GHL). The residue at position 226 (lysine 226) is an N6-(pyridoxal phosphate)lysine. Residues glutamate 241 and 349-351 (SPF) each bind (6S)-5,6,7,8-tetrahydrofolate.

Belongs to the SHMT family. As to quaternary structure, homodimer. Pyridoxal 5'-phosphate is required as a cofactor.

The protein resides in the cytoplasm. It carries out the reaction (6R)-5,10-methylene-5,6,7,8-tetrahydrofolate + glycine + H2O = (6S)-5,6,7,8-tetrahydrofolate + L-serine. The protein operates within one-carbon metabolism; tetrahydrofolate interconversion. Its pathway is amino-acid biosynthesis; glycine biosynthesis; glycine from L-serine: step 1/1. Its function is as follows. Catalyzes the reversible interconversion of serine and glycine with tetrahydrofolate (THF) serving as the one-carbon carrier. This reaction serves as the major source of one-carbon groups required for the biosynthesis of purines, thymidylate, methionine, and other important biomolecules. Also exhibits THF-independent aldolase activity toward beta-hydroxyamino acids, producing glycine and aldehydes, via a retro-aldol mechanism. The protein is Serine hydroxymethyltransferase of Macrococcus caseolyticus (strain JCSC5402) (Macrococcoides caseolyticum).